Consider the following 418-residue polypeptide: F-box/LRR-repeat protein 14 (418 aa).

One can recognise an F-box domain in the interval 2-48 (ETHISCLFPELLAMIFGYLDVRDKGRAAQVCTAWRDAAYHKSVWRGV). Residues 2-48 (ETHISCLFPELLAMIFGYLDVRDKGRAAQVCTAWRDAAYHKSVWRGV) form a required for down-regulation of SNAI1 region. LRR repeat units lie at residues 144–163 (GLEV…GLLL), 170–191 (RLKS…GHLA), 203–225 (GLEQ…HISR), 229–250 (GLRL…LHLS), and 254–275 (SLRS…MHLA).

As to quaternary structure, part of a SCF (SKP1-cullin-F-box) ubiquitin-protein ligase complex. Interacts with SKP1 and CUL1. Interacts with SNAI1; the interaction requires the phosphorylation of the two serine residues in the substrate destruction motif D-S-G-X(2,3,4)-S.

The protein localises to the cytoplasm. Its function is as follows. Substrate-recognition component of some SCF (SKP1-CUL1-F-box protein)-type E3 ubiquitin-protein ligase complexes. The SCF(FBXL14) complex acts by mediating ubiquitination and subsequent degradation of SNAI1. The sequence is that of F-box/LRR-repeat protein 14 (FBXL14) from Homo sapiens (Human).